The sequence spans 383 residues: MRALHVPAGSATALLLPALQRVLGGSDPALVAVPTQHESLLGALRVGEQIDDDVALVVTTSGTTGPPKGAMLTAAALTASASAAHDRLGGPGSWLLAVPPYHIAGLAVLVRSVIAGSVPVELNVSAGFDVTELPNAIKRLGSGRRYTSLVAAQLAKALTDPAATAALAELDAVLIGGGPAPRPILDAAAAAGITVVRTYGMSETSGGCVYDGVPLDGVRLRVLAGGRIAIGGATLAKGYRNPVSPDPFAEPGWFHTDDLGALESGDSGVLTVLGRADEAISTGGFTVLPQPVEAALGTHPAVRDCAVFGLADDRLGQRVVAAIVVGDGCPPPTLEALRAHVARTLDVTAAPRELHVVNVLPRRGIGKVDRAALVRRFAGEADQ.

The protein belongs to the ATP-dependent AMP-binding enzyme family. MenE subfamily.

The catalysed reaction is 2-succinylbenzoate + ATP + CoA = 2-succinylbenzoyl-CoA + AMP + diphosphate. Its pathway is quinol/quinone metabolism; 1,4-dihydroxy-2-naphthoate biosynthesis; 1,4-dihydroxy-2-naphthoate from chorismate: step 5/7. The protein operates within quinol/quinone metabolism; menaquinone biosynthesis. Its function is as follows. Converts 2-succinylbenzoate (OSB) to 2-succinylbenzoyl-CoA (OSB-CoA). May be involved in the biosynthesis of menaquinone. This chain is Probable 2-succinylbenzoate--CoA ligase (menE), found in Mycobacterium tuberculosis (strain CDC 1551 / Oshkosh).